A 223-amino-acid chain; its full sequence is Retbindin (223 aa).

The first 30 residues, 1–30, serve as a signal peptide directing secretion; it reads MANRGHTQPRALAWALGLTLVWILLGACGG. 4 disulfides stabilise this stretch: Cys-73-Cys-143, Cys-80-Cys-120, Cys-113-Cys-157, and Cys-126-Cys-139.

Belongs to the folate receptor family. In terms of processing, not N-glycosylated.

The protein resides in the secreted. It is found in the extracellular space. It localises to the extracellular matrix. Its subcellular location is the interphotoreceptor matrix. The protein localises to the cell membrane. Functionally, riboflavin-binding protein which might have a role in retinal flavin transport. The polypeptide is Retbindin (RTBDN) (Canis lupus familiaris (Dog)).